Here is a 443-residue protein sequence, read N- to C-terminus: Phosphomevalonate kinase ERG8 (443 aa).

Residue 160–170 (ANKTGLGSSAA) participates in ATP binding.

This sequence belongs to the GHMP kinase family. Mevalonate kinase subfamily.

It carries out the reaction (R)-5-phosphomevalonate + ATP = (R)-5-diphosphomevalonate + ADP. The protein operates within isoprenoid biosynthesis; isopentenyl diphosphate biosynthesis via mevalonate pathway; isopentenyl diphosphate from (R)-mevalonate: step 2/3. In terms of biological role, phosphomevalonate kinase; part of the second module of ergosterol biosynthesis pathway that includes the middle steps of the pathway. ERG8 converts 5-phosphomevalonate to 5-diphosphomevalonate. The second module is carried out in the vacuole and involves the formation of farnesyl diphosphate, which is also an important intermediate in the biosynthesis of ubiquinone, dolichol, heme and prenylated proteins. Activity by the mevalonate kinase ERG12 (FG05912) first converts mevalonate into 5-phosphomevalonate. 5-phosphomevalonate is then further converted to 5-diphosphomevalonate by the phosphomevalonate kinase ERG8 (FG09764). The diphosphomevalonate decarboxylase ERG19 (FG10424) then produces isopentenyl diphosphate. The isopentenyl-diphosphate delta-isomerase IDI1 (FG09722) then catalyzes the 1,3-allylic rearrangement of the homoallylic substrate isopentenyl (IPP) to its highly electrophilic allylic isomer, dimethylallyl diphosphate (DMAPP). Finally the farnesyl diphosphate synthase ERG20 (FG06784) catalyzes the sequential condensation of isopentenyl pyrophosphate with dimethylallyl pyrophosphate, and then with the resultant geranylpyrophosphate to the ultimate product farnesyl pyrophosphate. The sequence is that of Phosphomevalonate kinase ERG8 from Gibberella zeae (strain ATCC MYA-4620 / CBS 123657 / FGSC 9075 / NRRL 31084 / PH-1) (Wheat head blight fungus).